Reading from the N-terminus, the 413-residue chain is Multidrug resistance protein MdtA (413 aa).

Residues methionine 1–alanine 20 form the signal peptide. Disordered regions lie at residues serine 31–proline 57 and glutamate 391–alanine 413. A compositionally biased stretch (basic and acidic residues) spans alanine 397–alanine 413.

Belongs to the membrane fusion protein (MFP) (TC 8.A.1) family. As to quaternary structure, part of a tripartite efflux system composed of MdtA, MdtB and MdtC.

It localises to the cell inner membrane. The protein is Multidrug resistance protein MdtA of Salmonella paratyphi C (strain RKS4594).